The chain runs to 148 residues: Putative nickel-responsive regulator (148 aa).

Histidine 88, histidine 99, histidine 101, and cysteine 107 together coordinate Ni(2+).

The protein belongs to the transcriptional regulatory CopG/NikR family. As to quaternary structure, homotetramer. It depends on Ni(2+) as a cofactor.

Its function is as follows. Transcriptional regulator. This Helicobacter pylori (strain J99 / ATCC 700824) (Campylobacter pylori J99) protein is Putative nickel-responsive regulator.